The sequence spans 635 residues: Threonine--tRNA ligase (635 aa).

The TGS domain occupies 1–58 (MIHVTCNQEAFELPEGASAMDLANKMKQSHCFAGALINDQEKDLSTTLQDGDTVLFLT). The interval 237–528 (DHRVLGTKLD…LIEHFKGRFP (292 aa)) is catalytic. 3 residues coordinate Zn(2+): C328, H379, and H505.

It belongs to the class-II aminoacyl-tRNA synthetase family. In terms of assembly, homodimer. The cofactor is Zn(2+).

It localises to the cytoplasm. It catalyses the reaction tRNA(Thr) + L-threonine + ATP = L-threonyl-tRNA(Thr) + AMP + diphosphate + H(+). Functionally, catalyzes the attachment of threonine to tRNA(Thr) in a two-step reaction: L-threonine is first activated by ATP to form Thr-AMP and then transferred to the acceptor end of tRNA(Thr). Also edits incorrectly charged L-seryl-tRNA(Thr). The protein is Threonine--tRNA ligase of Chlamydia trachomatis serovar A (strain ATCC VR-571B / DSM 19440 / HAR-13).